The sequence spans 30 residues: Cyclotide hyen-E (30 aa).

The segment at residues 1–30 (GVPCGESCVYIPCFTGIINCSCRDKVCYNN) is a cross-link (cyclopeptide (Gly-Asn)). Cystine bridges form between Cys-4–Cys-20, Cys-8–Cys-22, and Cys-13–Cys-27.

This is a cyclic peptide. As to expression, detected in stems (at protein level).

Probably participates in a plant defense mechanism. Has cytotoxic activity against HUVEC cells (LC(50)= 2.17 uM) and various cancer cells including HeLa (LC(50)= 3.05 uM), MCF-7 and K562. Displays very weak hemolytic activity. Binds to and induces leakage in phospholipd membranes, particularly ones containing 1-palmitoyl-2-oleophosphatidylethanolamine (POPE). The chain is Cyclotide hyen-E from Pigea enneasperma (Spade flower).